We begin with the raw amino-acid sequence, 144 residues long: D-aminoacyl-tRNA deacylase (144 aa).

The short motif at 136 to 137 (GP) is the Gly-cisPro motif, important for rejection of L-amino acids element.

It belongs to the DTD family. In terms of assembly, homodimer.

The protein resides in the cytoplasm. The catalysed reaction is glycyl-tRNA(Ala) + H2O = tRNA(Ala) + glycine + H(+). The enzyme catalyses a D-aminoacyl-tRNA + H2O = a tRNA + a D-alpha-amino acid + H(+). Functionally, an aminoacyl-tRNA editing enzyme that deacylates mischarged D-aminoacyl-tRNAs. Also deacylates mischarged glycyl-tRNA(Ala), protecting cells against glycine mischarging by AlaRS. Acts via tRNA-based rather than protein-based catalysis; rejects L-amino acids rather than detecting D-amino acids in the active site. By recycling D-aminoacyl-tRNA to D-amino acids and free tRNA molecules, this enzyme counteracts the toxicity associated with the formation of D-aminoacyl-tRNA entities in vivo and helps enforce protein L-homochirality. The protein is D-aminoacyl-tRNA deacylase of Vibrio parahaemolyticus serotype O3:K6 (strain RIMD 2210633).